Reading from the N-terminus, the 215-residue chain is Sodium channel regulatory subunit beta-3 (215 aa).

An N-terminal signal peptide occupies residues 1 to 22 (MPAFNRLFPLVSLVLIYWASVC). The Extracellular portion of the chain corresponds to 23 to 156 (FPVCVEVPSE…EEAGEDFTSV (134 aa)). Positions 24–138 (PVCVEVPSET…EAHRPFVKTT (115 aa)) constitute an Ig-like C2-type domain. 2 disulfides stabilise this stretch: C26-C48 and C45-C120. N-linked (GlcNAc...) asparagine glycosylation is found at N95, N109, N113, and N121. The chain crosses the membrane as a helical span at residues 157 to 178 (VSEIMMYILLVFLTLWLLIEMI). Over 179–215 (YCYRKVSKAEEAAQENASDYLAIPSENKENSAVPVEE) the chain is Cytoplasmic.

It belongs to the sodium channel auxiliary subunit SCN3B (TC 8.A.17) family. As to quaternary structure, a voltage-gated sodium (Nav) channel consists of an ion-conducting pore-forming alpha subunit functional on its own that is regulated by one or more beta subunits. Forms homodimers and homotrimers. SCN3B is non-covalently associated with alpha subunits and induces the formation of alpha subunit oligomers, including trimers. Interacts with SCN5A/Nav1.5; regulatory subunit of SCN5A/Nav1.5. Interacts with SCN7A/Nav2.1; probable regulatory subunit of SCN7A/Nav2.1. Interacts with SCN10A; regulatory subunit of SCN10A/Nav1.8. Interacts with NFASC; probably involved in targeting the sodium channels to the nodes of Ranvier. In terms of processing, intramolecular disulfide bonds favor the voltage-gated sodium channel oligomeric complex assembly. N-glycosylated.

The protein localises to the cell membrane. Functionally, regulatory subunit of multiple voltage-gated sodium (Nav) channels directly mediating the depolarization of excitable membranes. Navs, also called VGSCs (voltage-gated sodium channels) or VDSCs (voltage-dependent sodium channels), operate by switching between closed and open conformations depending on the voltage difference across the membrane. In the open conformation they allow Na(+) ions to selectively pass through the pore, along their electrochemical gradient. The influx of Na+ ions provokes membrane depolarization, initiating the propagation of electrical signals throughout cells and tissues. The accessory beta subunits participate in localization and functional modulation of the Nav channels. Modulates the activity of SCN2A/Nav1.2, causing a hyperpolarizing shift in the voltage-dependence of inactivation of the channel and increasing the fraction of channels operating in the fast gating mode. Modulates the activity of SCN5A/Nav1.5. Could also regulate the atypical sodium channel SCN7A/Nav2.1. Modulates the activity of SCN10A/Nav1.8, regulating its oligomerization and accelerating the recovery from inactivation. This is Sodium channel regulatory subunit beta-3 from Macaca fascicularis (Crab-eating macaque).